Consider the following 604-residue polypeptide: Glutamine--fructose-6-phosphate aminotransferase [isomerizing] (604 aa).

Cys2 serves as the catalytic Nucleophile; for GATase activity. The Glutamine amidotransferase type-2 domain occupies 2–219 (CGIMGAVSER…EGDSACVTTQ (218 aa)). SIS domains follow at residues 279–427 (LRAS…DNRA) and 454–594 (LASL…VDQP). Lys599 (for Fru-6P isomerization activity) is an active-site residue.

As to quaternary structure, homodimer.

It localises to the cytoplasm. The enzyme catalyses D-fructose 6-phosphate + L-glutamine = D-glucosamine 6-phosphate + L-glutamate. Catalyzes the first step in hexosamine metabolism, converting fructose-6P into glucosamine-6P using glutamine as a nitrogen source. This is Glutamine--fructose-6-phosphate aminotransferase [isomerizing] from Legionella pneumophila (strain Lens).